A 352-amino-acid polypeptide reads, in one-letter code: Quinolinate synthase (352 aa).

Residues His48 and Ser69 each contribute to the iminosuccinate site. Cys114 is a [4Fe-4S] cluster binding site. Residues 140–142 (YAN) and Ser157 each bind iminosuccinate. Cys201 provides a ligand contact to [4Fe-4S] cluster. Iminosuccinate contacts are provided by residues 227–229 (HPE) and Thr244. Cys298 serves as a coordination point for [4Fe-4S] cluster.

The protein belongs to the quinolinate synthase family. Type 1 subfamily. The cofactor is [4Fe-4S] cluster.

Its subcellular location is the cytoplasm. It catalyses the reaction iminosuccinate + dihydroxyacetone phosphate = quinolinate + phosphate + 2 H2O + H(+). It participates in cofactor biosynthesis; NAD(+) biosynthesis; quinolinate from iminoaspartate: step 1/1. In terms of biological role, catalyzes the condensation of iminoaspartate with dihydroxyacetone phosphate to form quinolinate. This chain is Quinolinate synthase, found in Pseudomonas putida (strain GB-1).